The chain runs to 278 residues: HTH-type transcriptional activator RhaS (278 aa).

One can recognise an HTH araC/xylS-type domain in the interval 174 to 272 (NQLMAWLEDH…NWSPRDIRQG (99 aa)). 2 consecutive DNA-binding regions (H-T-H motif) follow at residues 191–212 (EAVA…KQHT) and 239–262 (VTEI…RREF).

As to quaternary structure, binds DNA as a dimer.

The protein resides in the cytoplasm. Functionally, activates expression of the rhaBAD and rhaT operons. The polypeptide is HTH-type transcriptional activator RhaS (Salmonella dublin (strain CT_02021853)).